We begin with the raw amino-acid sequence, 181 residues long: Salmonella anti-inflammatory response activator (181 aa).

The helical transmembrane segment at 4-24 (FVYIYILVIYGSYLWFSLGGN) threads the bilayer.

In terms of assembly, interacts with host (human) STAT3.

The protein resides in the membrane. The protein localises to the host cytoplasm. A Salmonella strain-specific effector that induces a host STAT3-dependent anti-inflammatory pathway. In bacteria-infected host cells (human) leads to phosphorylation of host STAT3, at least on 'Tyr-705' and interleukin-10 (IL-10, IL10) production; expressing the gene alone in host cells induces STAT3 phosphorylation and IL-10 production. IL-10 production requires STAT3 in infected cells. Contributes to virulence in mouse infection models. Encoded in only a few S.typhimurium serovars, it may be a specific effector for adaptation to bovine hosts. The sequence is that of Salmonella anti-inflammatory response activator from Salmonella typhimurium (strain 14028s / SGSC 2262).